The chain runs to 193 residues: Cryptic protein (193 aa).

The N-terminal stretch at 1–25 (MFWRKHVRILFTVTLIWQAIHLGKG) is a signal peptide. Asparagine 38 and asparagine 60 each carry an N-linked (GlcNAc...) asparagine glycan. 2 disulfides stabilise this stretch: cysteine 91/cysteine 103 and cysteine 105/cysteine 114. One can recognise an EGF-like domain in the interval 91 to 115 (CQNGGTCILGAFCACPKHFSGRHCE).

It belongs to the EGF-CFC (Cripto-1/FRL1/Cryptic) family.

Its subcellular location is the cell membrane. The protein resides in the secreted. May play a role in mesoderm and/or neural patterning during gastrulation. The polypeptide is Cryptic protein (CFC1) (Gallus gallus (Chicken)).